Here is a 380-residue protein sequence, read N- to C-terminus: DNA replication and repair protein RecF (380 aa).

ATP is bound at residue 30-37 (GPNGFGKT).

Belongs to the RecF family.

It is found in the cytoplasm. The RecF protein is involved in DNA metabolism; it is required for DNA replication and normal SOS inducibility. RecF binds preferentially to single-stranded, linear DNA. It also seems to bind ATP. The polypeptide is DNA replication and repair protein RecF (Mycobacterium sp. (strain KMS)).